Here is a 197-residue protein sequence, read N- to C-terminus: MKVKMSKLIILSGPSGVGKGTIESLLLKNKNLLIKLAISATTREKRRDEINGVNYFFLTVQEFKEKIENDEFIEWSCHFNNYYGTLKSQIKFIQSQNFIPLLEIDTTGAKNIIENYKNKGELSQLLTIFILPPSIESLKNRIQKRLTETNIQINQRLEKAKAEIKVKNLFKFQVVNDNLEKCVAQIEKIISKEIQKT.

Residues 6–191 (SKLIILSGPS…CVAQIEKIIS (186 aa)) enclose the Guanylate kinase-like domain. 13 to 20 (GPSGVGKG) contributes to the ATP binding site.

This sequence belongs to the guanylate kinase family.

Its subcellular location is the cytoplasm. The enzyme catalyses GMP + ATP = GDP + ADP. In terms of biological role, essential for recycling GMP and indirectly, cGMP. In Mesomycoplasma hyopneumoniae (strain 7448) (Mycoplasma hyopneumoniae), this protein is Guanylate kinase.